A 123-amino-acid chain; its full sequence is Fluoride-specific ion channel FluC 2 (123 aa).

2 helical membrane passes run 1-21 and 30-50; these read MTML…FLLD and VPVP…LGLI. Residues Gly74 and Thr77 each contribute to the Na(+) site. Residues 99 to 119 traverse the membrane as a helical segment; the sequence is ALHCMGMAIAGVLAAILGLAL.

This sequence belongs to the fluoride channel Fluc/FEX (TC 1.A.43) family.

Its subcellular location is the cell membrane. The catalysed reaction is fluoride(in) = fluoride(out). Na(+) is not transported, but it plays an essential structural role and its presence is essential for fluoride channel function. Functionally, fluoride-specific ion channel. Important for reducing fluoride concentration in the cell, thus reducing its toxicity. The protein is Fluoride-specific ion channel FluC 2 of Cutibacterium acnes (strain DSM 16379 / KPA171202) (Propionibacterium acnes).